The primary structure comprises 331 residues: Porphobilinogen deaminase (331 aa).

Cys-248 is subject to S-(dipyrrolylmethanemethyl)cysteine. The disordered stretch occupies residues 307–331 (QLLQAPKQTGEPHDPDRHDKGTGRP). The span at 316 to 331 (GEPHDPDRHDKGTGRP) shows a compositional bias: basic and acidic residues.

The protein belongs to the HMBS family. In terms of assembly, monomer. Dipyrromethane is required as a cofactor.

It catalyses the reaction 4 porphobilinogen + H2O = hydroxymethylbilane + 4 NH4(+). The protein operates within porphyrin-containing compound metabolism; protoporphyrin-IX biosynthesis; coproporphyrinogen-III from 5-aminolevulinate: step 2/4. Functionally, tetrapolymerization of the monopyrrole PBG into the hydroxymethylbilane pre-uroporphyrinogen in several discrete steps. In Acidothermus cellulolyticus (strain ATCC 43068 / DSM 8971 / 11B), this protein is Porphobilinogen deaminase.